We begin with the raw amino-acid sequence, 1149 residues long: Protogenin A (1149 aa).

A signal peptide spans 1-23; it reads MASFKRDLYLFLAVFLSISGVWS. The Extracellular segment spans residues 24 to 932; the sequence is FSELFFIKEP…GFYHLDQRSM (909 aa). 4 Ig-like domains span residues 27–117, 122–209, 222–309, and 314–399; these read LFFI…ARLT, STFT…ATLT, PRII…ANIT, and PSLV…RLIV. Disulfide bonds link cysteine 48–cysteine 100 and cysteine 143–cysteine 192. N-linked (GlcNAc...) asparagine glycosylation occurs at asparagine 78. Asparagine 230 carries an N-linked (GlcNAc...) asparagine glycan. Cysteines 243 and 291 form a disulfide. Residues asparagine 300 and asparagine 307 are each glycosylated (N-linked (GlcNAc...) asparagine). The cysteines at positions 335 and 382 are disulfide-linked. Fibronectin type-III domains are found at residues 408–502, 504–600, 605–704, 711–804, and 809–905; these read APRN…TLED, PLRA…TPKA, VPLA…VRDR, PPHH…TLPE, and APVG…IHTD. N-linked (GlcNAc...) asparagine glycosylation is found at asparagine 460 and asparagine 475. Asparagine 617 is a glycosylation site (N-linked (GlcNAc...) asparagine). A disordered region spans residues 646–666; sequence GQSEAAQAQIPPHHRQHTIGG. N-linked (GlcNAc...) asparagine glycans are attached at residues asparagine 720, asparagine 741, and asparagine 753. The helical transmembrane segment at 933–953 threads the bilayer; it reads AGIAVGVCIALTCIIICILIL. The Cytoplasmic segment spans residues 954–1149; sequence ACRSKTRKSC…EQEMTDLHPV (196 aa). The tract at residues 1060–1149 is disordered; it reads YTETSPENPP…EQEMTDLHPV (90 aa). Residues 1061–1073 show a composition bias toward polar residues; that stretch reads TETSPENPPTTLQ. A compositionally biased stretch (basic and acidic residues) spans 1084–1106; that stretch reads EGSHSSEGSHETSDSGRYSHDDT.

This sequence belongs to the immunoglobulin superfamily. DCC family. As to expression, expression begins in the posterior region of the embryo and this posterior restriction persists at the 4 s stage. At early somite stages, expressed along the neural tube with lower levels in the lateral and paraxial mesoderm. Expression decreases caudally and rostrally becomes restricted to the ventral part of the brain. Widespread in the spinal cord at 30 hours post-fertilization (hpf) and is also expressed in the lens from this time. At 40 hpf, expression is restricted to the lens.

It localises to the membrane. Functionally, may play a role in anteroposterior axis elongation. The protein is Protogenin A of Danio rerio (Zebrafish).